The chain runs to 80 residues: Sulfur carrier protein TusA (80 aa).

Cys-17 (cysteine persulfide intermediate) is an active-site residue.

This sequence belongs to the sulfur carrier protein TusA family.

Its subcellular location is the cytoplasm. In terms of biological role, sulfur carrier protein which probably makes part of a sulfur-relay system. The chain is Sulfur carrier protein TusA from Pseudomonas putida (strain ATCC 47054 / DSM 6125 / CFBP 8728 / NCIMB 11950 / KT2440).